The chain runs to 537 residues: CTP synthase (537 aa).

Positions 1–268 (MSFKCIFLTG…STFITEKLGL (268 aa)) are amidoligase domain. Ser-14 contributes to the CTP binding site. Position 14 (Ser-14) interacts with UTP. Position 15 to 20 (15 to 20 (SLGKGL)) interacts with ATP. Tyr-55 contributes to the L-glutamine binding site. Asp-72 is a binding site for ATP. Mg(2+)-binding residues include Asp-72 and Glu-142. CTP-binding positions include 149 to 151 (DIE), 188 to 193 (KTKPTQ), and Lys-224. Residues 188–193 (KTKPTQ) and Lys-224 contribute to the UTP site. Positions 294-533 (RLGLVGKYVQ…IEAALLHSRN (240 aa)) constitute a Glutamine amidotransferase type-1 domain. Gly-353 is an L-glutamine binding site. Cys-380 serves as the catalytic Nucleophile; for glutamine hydrolysis. Residues 381 to 384 (LGMQ), Glu-404, and Arg-461 each bind L-glutamine. Active-site residues include His-506 and Glu-508.

This sequence belongs to the CTP synthase family. Homotetramer.

The enzyme catalyses UTP + L-glutamine + ATP + H2O = CTP + L-glutamate + ADP + phosphate + 2 H(+). It catalyses the reaction L-glutamine + H2O = L-glutamate + NH4(+). The catalysed reaction is UTP + NH4(+) + ATP = CTP + ADP + phosphate + 2 H(+). It functions in the pathway pyrimidine metabolism; CTP biosynthesis via de novo pathway; CTP from UDP: step 2/2. Its activity is regulated as follows. Allosterically activated by GTP, when glutamine is the substrate; GTP has no effect on the reaction when ammonia is the substrate. The allosteric effector GTP functions by stabilizing the protein conformation that binds the tetrahedral intermediate(s) formed during glutamine hydrolysis. Inhibited by the product CTP, via allosteric rather than competitive inhibition. In terms of biological role, catalyzes the ATP-dependent amination of UTP to CTP with either L-glutamine or ammonia as the source of nitrogen. Regulates intracellular CTP levels through interactions with the four ribonucleotide triphosphates. The polypeptide is CTP synthase (Chlamydia abortus (strain DSM 27085 / S26/3) (Chlamydophila abortus)).